We begin with the raw amino-acid sequence, 189 residues long: Peptidyl-tRNA hydrolase (189 aa).

Y14 provides a ligand contact to tRNA. H19 acts as the Proton acceptor in catalysis. Positions 64, 66, and 112 each coordinate tRNA.

It belongs to the PTH family. In terms of assembly, monomer.

The protein resides in the cytoplasm. The catalysed reaction is an N-acyl-L-alpha-aminoacyl-tRNA + H2O = an N-acyl-L-amino acid + a tRNA + H(+). In terms of biological role, hydrolyzes ribosome-free peptidyl-tRNAs (with 1 or more amino acids incorporated), which drop off the ribosome during protein synthesis, or as a result of ribosome stalling. Functionally, catalyzes the release of premature peptidyl moieties from peptidyl-tRNA molecules trapped in stalled 50S ribosomal subunits, and thus maintains levels of free tRNAs and 50S ribosomes. The sequence is that of Peptidyl-tRNA hydrolase from Brevibacillus brevis (strain 47 / JCM 6285 / NBRC 100599).